The chain runs to 316 residues: N-acetylmuramic acid 6-phosphate etherase (316 aa).

A disordered region spans residues 1 to 23 (MAGFDPTLQPSDDRGHLLTEQSN). In terms of domain architecture, SIS spans 66-229 (ISKRLSSGGR…STTVMVRLGK (164 aa)). Catalysis depends on E94, which acts as the Proton donor. The active site involves E125.

The protein belongs to the GCKR-like family. MurNAc-6-P etherase subfamily. As to quaternary structure, homodimer.

The enzyme catalyses N-acetyl-D-muramate 6-phosphate + H2O = N-acetyl-D-glucosamine 6-phosphate + (R)-lactate. The protein operates within amino-sugar metabolism; N-acetylmuramate degradation. Functionally, specifically catalyzes the cleavage of the D-lactyl ether substituent of MurNAc 6-phosphate, producing GlcNAc 6-phosphate and D-lactate. This chain is N-acetylmuramic acid 6-phosphate etherase, found in Synechococcus sp. (strain CC9902).